Consider the following 429-residue polypeptide: Enolase (429 aa).

Gln167 lines the (2R)-2-phosphoglycerate pocket. The active-site Proton donor is the Glu209. Mg(2+)-binding residues include Asp246, Glu289, and Asp316. (2R)-2-phosphoglycerate-binding residues include Lys341, Arg370, Ser371, and Lys392. Lys341 functions as the Proton acceptor in the catalytic mechanism.

This sequence belongs to the enolase family. Component of the RNA degradosome, a multiprotein complex involved in RNA processing and mRNA degradation. Mg(2+) serves as cofactor.

It is found in the cytoplasm. The protein localises to the secreted. Its subcellular location is the cell surface. It catalyses the reaction (2R)-2-phosphoglycerate = phosphoenolpyruvate + H2O. It participates in carbohydrate degradation; glycolysis; pyruvate from D-glyceraldehyde 3-phosphate: step 4/5. Functionally, catalyzes the reversible conversion of 2-phosphoglycerate (2-PG) into phosphoenolpyruvate (PEP). It is essential for the degradation of carbohydrates via glycolysis. This Pseudomonas aeruginosa (strain LESB58) protein is Enolase.